A 167-amino-acid polypeptide reads, in one-letter code: Disulfide bond formation protein B (167 aa).

Over 1-12 (MFLNLLDAPRRL) the chain is Cytoplasmic. The helical transmembrane segment at 13 to 29 (LALVALGCVALLAFGLY) threads the bilayer. The Periplasmic portion of the chain corresponds to 30 to 47 (LQHVVGLEPCPMCIVQRY). A disulfide bond links cysteine 39 and cysteine 42. Residues 48–63 (ALVLVAIVAGLTAITS) form a helical membrane-spanning segment. Residues 64–69 (NKKGLI) lie on the Cytoplasmic side of the membrane. A helical membrane pass occupies residues 70 to 87 (TGSGVLLLLAGFGAFVAA). The Periplasmic portion of the chain corresponds to 88 to 143 (RQSFLQWYPPEVASCGRDFYGMIETFPLQRAIPMIFKGSGDCAKVDWTFLGGSIAN). Residues cysteine 102 and cysteine 129 are joined by a disulfide bond. The chain crosses the membrane as a helical span at residues 144-162 (WSFVCFAVIGLTALTLIAR). Residues 163–167 (LARQR) lie on the Cytoplasmic side of the membrane.

It belongs to the DsbB family.

The protein localises to the cell inner membrane. Its function is as follows. Required for disulfide bond formation in some periplasmic proteins. Acts by oxidizing the DsbA protein. The sequence is that of Disulfide bond formation protein B from Polaromonas naphthalenivorans (strain CJ2).